The chain runs to 87 residues: Sodium channel neurotoxin MeuNaTxalpha-5* (87 aa).

A signal peptide spans 1–19 (MNYLILISFALLVITGVES). The region spanning 21 to 85 (RDAYIAKPHN…VPIRIPGKCH (65 aa)) is the LCN-type CS-alpha/beta domain. 4 disulfide bridges follow: Cys-31/Cys-84, Cys-35/Cys-57, Cys-43/Cys-67, and Cys-47/Cys-69. The propeptide at 86–87 (RR) is removed by a carboxypeptidase.

It belongs to the long (4 C-C) scorpion toxin superfamily. Sodium channel inhibitor family. Alpha subfamily. Expressed by the venom gland.

It localises to the secreted. Its function is as follows. Alpha toxins bind voltage-independently at site-3 of sodium channels (Nav) and inhibit the inactivation of the activated channels, thereby blocking neuronal transmission. This toxin inhibits inactivation of Nav1.6/SCN8A (EC(50)=790 nM) and drosophila DmNav1 (EC(50)=280 nM). The toxin (1 uM) does not significantly shift the midpoint of activation at the two channels, but induces a significant depolarizing shift in the V(1/2) of inactivation of the channels. Has antimicrobial activity. The protein is Sodium channel neurotoxin MeuNaTxalpha-5* of Mesobuthus eupeus (Lesser Asian scorpion).